A 382-amino-acid chain; its full sequence is Neuropeptide Y receptor type 1 (382 aa).

Residues 1–33 (MNSTLFSKVENHSIHYNASENSPLLAFENDDCH) lie on the Extracellular side of the membrane. N-linked (GlcNAc...) asparagine glycans are attached at residues Asn2, Asn11, and Asn17. Residues 34-54 (LPLAVIFTLALAYGAVIILGV) form a helical membrane-spanning segment. Topologically, residues 55–75 (SGNLALIIIILKQKEMRNVTN) are cytoplasmic. The chain crosses the membrane as a helical span at residues 76 to 96 (ILIVNLSFSDLLVAVMCLPFT). Residues 97-115 (FVYTLMDHWVFGETMCKLN) lie on the Extracellular side of the membrane. The cysteines at positions 112 and 197 are disulfide-linked. Residues 116 to 136 (PFVQCVSITVSIFSLVLIAVE) form a helical membrane-spanning segment. Residues 137-153 (RHQLIINPRGWRPNNRH) lie on the Cytoplasmic side of the membrane. The chain crosses the membrane as a helical span at residues 154-174 (AYIGITVIWVLAVASSLPFVI). At 175–210 (YQILTDEPFQNVSLAAFKDKYVCFDKFPSDSHRLSY) the chain is on the extracellular side. Residues 211-231 (TTLLLVLQYFGPLCFIFICYF) traverse the membrane as a helical segment. Topologically, residues 232 to 259 (KIYIRLKRRNNMMDKIRDSKYRSSETKR) are cytoplasmic. A helical transmembrane segment spans residues 260-280 (INIMLLSIVVAFAVCWLPLTI). Residues 281–298 (FNTVFDWNHQIIATCNHN) are Extracellular-facing. Residues 299 to 319 (LLFLLCHLTAMISTCVNPIFY) form a helical membrane-spanning segment. At 320 to 382 (GFLNKNFQRD…KISMNDNEKV (63 aa)) the chain is on the cytoplasmic side. Cys337 carries S-palmitoyl cysteine lipidation. A phosphoserine mark is found at Ser367 and Ser375.

Belongs to the G-protein coupled receptor 1 family. The alpha form is highly expressed in the brain, heart, kidney, spleen, skeletal muscle, and lung, whereas the beta receptor mRNA was not detected in these tissues. However, the beta form is expressed in mouse embryonic developmental stage (7 and 11 days), bone marrow cells and several hematopoietic cell lines.

Its subcellular location is the cell membrane. Its function is as follows. Receptor for neuropeptide Y and peptide YY. In Mus musculus (Mouse), this protein is Neuropeptide Y receptor type 1 (Npy1r).